We begin with the raw amino-acid sequence, 66 residues long: Large ribosomal subunit protein bL35 (66 aa).

A compositionally biased stretch (basic residues) spans 1–16 (MPKQKTHRASAKRFKR). The disordered stretch occupies residues 1 to 21 (MPKQKTHRASAKRFKRTGSGG).

Belongs to the bacterial ribosomal protein bL35 family.

The protein is Large ribosomal subunit protein bL35 of Streptococcus gordonii (strain Challis / ATCC 35105 / BCRC 15272 / CH1 / DL1 / V288).